We begin with the raw amino-acid sequence, 245 residues long: Transmembrane protein 116 (245 aa).

The next 4 membrane-spanning stretches (helical) occupy residues 24–44 (MAFVFSSLIPLLLMTPVFCLG), 88–108 (GIAIFLGSFVLSLLTIMVLLI), 141–161 (FYPVAFFCCWGPAVILMIIKL), and 173–195 (LYVLQALTATSQGLLNCGVYGWT).

It localises to the membrane. The protein is Transmembrane protein 116 (TMEM116) of Homo sapiens (Human).